The sequence spans 135 residues: MLSPKRTRFRKQHRGRMKGISHRGNQICFGRYALQALEPAWITSRQIEAGRRAMSRNVRRGGQIWVRIFPDKPVTVRPTETRMGSGKGSPEYWVAVVKPGKIVYEMGGVAENIARKAISIAASKMPIRTQFIISG.

This sequence belongs to the universal ribosomal protein uL16 family. As to quaternary structure, part of the 50S ribosomal subunit.

It is found in the plastid. Its subcellular location is the chloroplast. This chain is Large ribosomal subunit protein uL16c, found in Lotus japonicus (Lotus corniculatus var. japonicus).